Here is a 416-residue protein sequence, read N- to C-terminus: L-cysteine:1D-myo-inositol 2-amino-2-deoxy-alpha-D-glucopyranoside ligase (416 aa).

Zn(2+) is bound at residue C45. Residues 45 to 48, T60, and 83 to 85 contribute to the L-cysteinyl-5'-AMP site; these read CGIT and NVT. A 'HIGH' region motif is present at residues 47–57; that stretch reads ITPYDSTHLGH. The 'ERGGDP' region motif lies at 191-196; that stretch reads ERGGDP. W232 contacts L-cysteinyl-5'-AMP. C236 contacts Zn(2+). 254-256 is a binding site for L-cysteinyl-5'-AMP; sequence GSD. A Zn(2+)-binding site is contributed by H261. V286 serves as a coordination point for L-cysteinyl-5'-AMP. Positions 292–296 match the 'KMSKS' region motif; sequence KMSKS.

The protein belongs to the class-I aminoacyl-tRNA synthetase family. MshC subfamily. As to quaternary structure, monomer. Requires Zn(2+) as cofactor.

The catalysed reaction is 1D-myo-inositol 2-amino-2-deoxy-alpha-D-glucopyranoside + L-cysteine + ATP = 1D-myo-inositol 2-(L-cysteinylamino)-2-deoxy-alpha-D-glucopyranoside + AMP + diphosphate + H(+). Catalyzes the ATP-dependent condensation of GlcN-Ins and L-cysteine to form L-Cys-GlcN-Ins. The protein is L-cysteine:1D-myo-inositol 2-amino-2-deoxy-alpha-D-glucopyranoside ligase of Brachybacterium faecium (strain ATCC 43885 / DSM 4810 / JCM 11609 / LMG 19847 / NBRC 14762 / NCIMB 9860 / 6-10).